A 375-amino-acid chain; its full sequence is EP300-interacting inhibitor of differentiation 3 (375 aa).

A coiled-coil region spans residues 23-51 (AWQHLVKQEEEEAVKKEEKEEGEDEEEEG). A disordered region spans residues 30–68 (QEEEEAVKKEEKEEGEDEEEEGSDSSSDDPNPEPPCMHP). Over residues 42-60 (EEGEDEEEEGSDSSSDDPN) the composition is skewed to acidic residues.

This sequence belongs to the NSE4 family. Component of the SMC5-SMC6 complex which consists at least of SMC5, SMC6, NSMCE2, NSMCE1, NSMCE4A or EID3 and NSMCE3; EID3 seems to be a testis-specific subunit. NSMCE1, NSMCE4A or EID3 and NSMCE3 probably form a subcomplex that bridges the head domains of the SMC5:SMC6 heterodimer. Homodimer, and heterodimer with EID2. Interacts with the C-terminal region of CREBBP.

Its subcellular location is the nucleus. The protein resides in the cytoplasm. The protein localises to the chromosome. It localises to the telomere. Its function is as follows. Tissue-specific component of the SMC5-SMC6 complex, a complex involved in repair of DNA double-strand breaks by homologous recombination. The complex may promote sister chromatid homologous recombination by recruiting the SMC1-SMC3 cohesin complex to double-strand breaks. The complex is required for telomere maintenance via recombination and mediates sumoylation of shelterin complex (telosome) components. Functionally, acts as a repressor of nuclear receptor-dependent transcription possibly by interfering with CREBBP-dependent coactivation. May function as a coinhibitor of other CREBBP/EP300-dependent transcription factors. In Mus musculus (Mouse), this protein is EP300-interacting inhibitor of differentiation 3.